A 208-amino-acid chain; its full sequence is Large ribosomal subunit protein uL4 (208 aa).

Residues 47–84 (ARAARERSDVARTGKKFGRQKGGGTARHGDRRAPVFIG) are disordered. Over residues 49–58 (AARERSDVAR) the composition is skewed to basic and acidic residues.

It belongs to the universal ribosomal protein uL4 family. Part of the 50S ribosomal subunit.

In terms of biological role, one of the primary rRNA binding proteins, this protein initially binds near the 5'-end of the 23S rRNA. It is important during the early stages of 50S assembly. It makes multiple contacts with different domains of the 23S rRNA in the assembled 50S subunit and ribosome. Its function is as follows. Forms part of the polypeptide exit tunnel. In Rhizorhabdus wittichii (strain DSM 6014 / CCUG 31198 / JCM 15750 / NBRC 105917 / EY 4224 / RW1) (Sphingomonas wittichii), this protein is Large ribosomal subunit protein uL4.